We begin with the raw amino-acid sequence, 183 residues long: Large ribosomal subunit protein uL6 (183 aa).

It belongs to the universal ribosomal protein uL6 family. In terms of assembly, part of the 50S ribosomal subunit.

Functionally, this protein binds to the 23S rRNA, and is important in its secondary structure. It is located near the subunit interface in the base of the L7/L12 stalk, and near the tRNA binding site of the peptidyltransferase center. The polypeptide is Large ribosomal subunit protein uL6 (Chlamydia trachomatis serovar A (strain ATCC VR-571B / DSM 19440 / HAR-13)).